The primary structure comprises 315 residues: Sulfate adenylyltransferase subunit 2 1 (315 aa).

The disordered stretch occupies residues 287 to 315 (DSSSSERQGRAIDHDQSGSMERKKREGYF). The span at 293–315 (RQGRAIDHDQSGSMERKKREGYF) shows a compositional bias: basic and acidic residues.

This sequence belongs to the PAPS reductase family. CysD subfamily. Heterodimer composed of CysD, the smaller subunit, and CysN.

The catalysed reaction is sulfate + ATP + H(+) = adenosine 5'-phosphosulfate + diphosphate. The protein operates within sulfur metabolism; hydrogen sulfide biosynthesis; sulfite from sulfate: step 1/3. In terms of biological role, with CysN forms the ATP sulfurylase (ATPS) that catalyzes the adenylation of sulfate producing adenosine 5'-phosphosulfate (APS) and diphosphate, the first enzymatic step in sulfur assimilation pathway. APS synthesis involves the formation of a high-energy phosphoric-sulfuric acid anhydride bond driven by GTP hydrolysis by CysN coupled to ATP hydrolysis by CysD. This Alkalilimnicola ehrlichii (strain ATCC BAA-1101 / DSM 17681 / MLHE-1) protein is Sulfate adenylyltransferase subunit 2 1.